The chain runs to 609 residues: Proteasome-associated ATPase (609 aa).

The tract at residues 1–25 is disordered; it reads MADSERSEAFGTPDDTPLSSNDAAE. The stretch at 19–96 forms a coiled coil; that stretch reads SSNDAAELEQ…LREEVDRLGQ (78 aa). Residue 296-301 participates in ATP binding; it reads GCGKTL. Residues 608–609 are docks into pockets in the proteasome alpha-ring; sequence YL.

It belongs to the AAA ATPase family. As to quaternary structure, homohexamer. Assembles into a hexameric ring structure that caps the 20S proteasome core. Strongly interacts with the prokaryotic ubiquitin-like protein Pup through a hydrophobic interface; the interacting region of ARC lies in its N-terminal coiled-coil domain. There is one Pup binding site per ARC hexamer ring. Upon ATP-binding, the C-terminus of ARC interacts with the alpha-rings of the proteasome core, possibly by binding to the intersubunit pockets.

It functions in the pathway protein degradation; proteasomal Pup-dependent pathway. In terms of biological role, ATPase which is responsible for recognizing, binding, unfolding and translocation of pupylated proteins into the bacterial 20S proteasome core particle. May be essential for opening the gate of the 20S proteasome via an interaction with its C-terminus, thereby allowing substrate entry and access to the site of proteolysis. Thus, the C-termini of the proteasomal ATPase may function like a 'key in a lock' to induce gate opening and therefore regulate proteolysis. The polypeptide is Proteasome-associated ATPase (Mycobacterium marinum (strain ATCC BAA-535 / M)).